Reading from the N-terminus, the 388-residue chain is Succinate--CoA ligase [ADP-forming] subunit beta (388 aa).

The ATP-grasp domain maps to 9–244; sequence KQLFAEYGLP…PSQDDPREAH (236 aa). Residues K46, 53–55, E99, T102, and E107 each bind ATP; that span reads GRG. Residues N199 and D213 each contribute to the Mg(2+) site. Residues N264 and 321-323 each bind substrate; that span reads GIV.

This sequence belongs to the succinate/malate CoA ligase beta subunit family. In terms of assembly, heterotetramer of two alpha and two beta subunits. Requires Mg(2+) as cofactor.

The enzyme catalyses succinate + ATP + CoA = succinyl-CoA + ADP + phosphate. It carries out the reaction GTP + succinate + CoA = succinyl-CoA + GDP + phosphate. It participates in carbohydrate metabolism; tricarboxylic acid cycle; succinate from succinyl-CoA (ligase route): step 1/1. Functionally, succinyl-CoA synthetase functions in the citric acid cycle (TCA), coupling the hydrolysis of succinyl-CoA to the synthesis of either ATP or GTP and thus represents the only step of substrate-level phosphorylation in the TCA. The beta subunit provides nucleotide specificity of the enzyme and binds the substrate succinate, while the binding sites for coenzyme A and phosphate are found in the alpha subunit. This is Succinate--CoA ligase [ADP-forming] subunit beta from Ectopseudomonas mendocina (strain ymp) (Pseudomonas mendocina).